The sequence spans 559 residues: Cytokine-like nuclear factor N-PAC (559 aa).

A PWWP domain is found at 9 to 70 (VNDLVWAKMK…ETQIKPYQEF (62 aa)). The segment at 106–137 (SEQDNRPDPDVEFNKLREGGTESGEETTVNNT) is disordered. Residues 108–125 (QDNRPDPDVEFNKLREGG) show a composition bias toward basic and acidic residues. The interval 267–559 (RNIQASNLKF…SSAVYVRARF (293 aa)) is dehydrogenase domain. Residues 277-291 (GFLG…MVKN) and lysine 511 contribute to the NAD(+) site.

The protein belongs to the HIBADH-related family. NP60 subfamily. Binds to mononucleosomes.

The protein resides in the chromosome. Nucleosome-destabilizing factor that is recruited to genes during transcriptional activation and colocalizes with a subset of trimethylated 'Lys-36' histone H3 (H3K36me3)-enriched regions. The sequence is that of Cytokine-like nuclear factor N-PAC from Aedes aegypti (Yellowfever mosquito).